We begin with the raw amino-acid sequence, 249 residues long: 3-deoxy-D-manno-octulosonic acid kinase (249 aa).

Asp-175 is a catalytic residue.

Belongs to the protein kinase superfamily. KdkA/RfaP family.

The protein resides in the cell inner membrane. It carries out the reaction an alpha-Kdo-(2-&gt;6)-lipid IVA + ATP = a 4-O-phospho-alpha-Kdo-(2-&gt;6)-lipid IVA + ADP + H(+). It participates in bacterial outer membrane biogenesis; LPS core biosynthesis. Functionally, catalyzes the ATP-dependent phosphorylation of the 3-deoxy-D-manno-octulosonic acid (Kdo) residue in Kdo-lipid IV(A) at the 4-OH position. The sequence is that of 3-deoxy-D-manno-octulosonic acid kinase from Xanthomonas axonopodis pv. citri (strain 306).